The primary structure comprises 423 residues: Histidine--tRNA ligase (423 aa).

Belongs to the class-II aminoacyl-tRNA synthetase family. As to quaternary structure, homodimer.

It localises to the cytoplasm. The enzyme catalyses tRNA(His) + L-histidine + ATP = L-histidyl-tRNA(His) + AMP + diphosphate + H(+). The protein is Histidine--tRNA ligase of Moorella thermoacetica (strain ATCC 39073 / JCM 9320).